A 136-amino-acid chain; its full sequence is MRYFIGIASKNHIQIGQAGGFCQLCHGKAAPLKRMKQNDKIIYYSPKLTMESKEPYQAFTALGEIADENVYQVEMFKGFFPFRRNVLWSEIKRECPLNVAKTHPEWKAYASKLRFGHFEVSKEFFNFLAEYMTQDS.

The protein belongs to the UPF0310 family.

This Helicobacter hepaticus (strain ATCC 51449 / 3B1) protein is UPF0310 protein HH_1062.